The chain runs to 321 residues: Bifunctional methyltransferase/endonuclease (321 aa).

The probable methylated-DNA--protein-cysteine methyltransferase stretch occupies residues 1 to 86; it reads MLSVDYENFD…PLGSAEKMRR (86 aa). Residue Cys61 is part of the active site. The interval 87-318 is endonuclease V; the sequence is LIRDGITITN…YDFSTRNTAI (232 aa). The Mg(2+) site is built by Asp145 and Asp204.

This sequence in the N-terminal section; belongs to the MGMT family. It in the C-terminal section; belongs to the endonuclease V family. It depends on Mg(2+) as a cofactor.

It is found in the cytoplasm. The enzyme catalyses Endonucleolytic cleavage at apurinic or apyrimidinic sites to products with a 5'-phosphate.. DNA repair enzyme involved in the repair of deaminated bases. Selectively cleaves double-stranded DNA at the second phosphodiester bond 3' to a deoxyinosine leaving behind the intact lesion on the nicked DNA. The sequence is that of Bifunctional methyltransferase/endonuclease from Thermoplasma volcanium (strain ATCC 51530 / DSM 4299 / JCM 9571 / NBRC 15438 / GSS1).